An 85-amino-acid chain; its full sequence is Translation initiation factor IF-1 (85 aa).

Residues 1–72 (MAKEELIEMH…SKGRITFRHI (72 aa)) enclose the S1-like domain.

It belongs to the IF-1 family. As to quaternary structure, component of the 30S ribosomal translation pre-initiation complex which assembles on the 30S ribosome in the order IF-2 and IF-3, IF-1 and N-formylmethionyl-tRNA(fMet); mRNA recruitment can occur at any time during PIC assembly.

It localises to the cytoplasm. Functionally, one of the essential components for the initiation of protein synthesis. Stabilizes the binding of IF-2 and IF-3 on the 30S subunit to which N-formylmethionyl-tRNA(fMet) subsequently binds. Helps modulate mRNA selection, yielding the 30S pre-initiation complex (PIC). Upon addition of the 50S ribosomal subunit IF-1, IF-2 and IF-3 are released leaving the mature 70S translation initiation complex. The chain is Translation initiation factor IF-1 from Polaromonas naphthalenivorans (strain CJ2).